The following is a 422-amino-acid chain: Probable ornithine aminotransferase, mitochondrial (422 aa).

Lys273 carries the post-translational modification N6-(pyridoxal phosphate)lysine.

This sequence belongs to the class-III pyridoxal-phosphate-dependent aminotransferase family. Pyridoxal 5'-phosphate serves as cofactor.

The protein resides in the mitochondrion matrix. It carries out the reaction a 2-oxocarboxylate + L-ornithine = L-glutamate 5-semialdehyde + an L-alpha-amino acid. Its pathway is amino-acid biosynthesis; L-proline biosynthesis; L-glutamate 5-semialdehyde from L-ornithine: step 1/1. The polypeptide is Probable ornithine aminotransferase, mitochondrial (Caenorhabditis elegans).